The sequence spans 231 residues: Lytic polysaccharide monooxygenase-like protein X325 (231 aa).

Positions 1–17 (MRLSLLVTLALTALIEA) are cleaved as a signal peptide. A Cu(2+)-binding site is contributed by His18. Residues Asn34, Asn55, Asn98, Asn133, Asn174, and Asn180 are each glycosylated (N-linked (GlcNAc...) asparagine). Intrachain disulfides connect Cys47–Cys157 and Cys122–Cys178. Ile202 is lipidated: GPI-anchor amidated isoleucine. Residues 203–231 (ASTTTGSAPRYYSWAGWLPLVAGAIWMAL) constitute a propeptide, removed in mature form.

This sequence belongs to the X325 family. It depends on Cu(2+) as a cofactor.

The protein localises to the cell membrane. Functionally, lytic polysaccharide monooxygenase-like protein that has diverged to biological functions other than polysaccharide degradation since it does not perform oxidative cleavage of polysaccharides. Acts as a cell surface-bound protein that functions in the copper-accumulation pathway. May also act as the major cell wall sensor that regulates MAP kinase-dependent hyphal anastomosis, the fusion of hyphal cells. The protein is Lytic polysaccharide monooxygenase-like protein X325 of Hypocrea jecorina (strain QM6a) (Trichoderma reesei).